Reading from the N-terminus, the 299-residue chain is Cytosolic sulfotransferase 1 (299 aa).

Residue 51–56 (KAGTTW) participates in 3'-phosphoadenylyl sulfate binding. The active-site Proton acceptor is H113. Residues R135, S143, Y199, 233–238 (VQFDAM), and 261–263 (RKG) contribute to the 3'-phosphoadenylyl sulfate site.

This sequence belongs to the sulfotransferase 1 family. Expressed in liver.

The protein resides in the cytoplasm. With respect to regulation, inhibited by Co(2+), Zn(2+), Cd(2+) and Pb(2+) ions. Inactivated by Hg(2+) and Cu(2+) ions. Functionally, sulfotransferase that utilizes 3'-phospho-5'-adenylyl sulfate (PAPS) as sulfonate donor to catalyze the sulfate conjugation of a variety of xenobiotic and endogenous compounds, including 2-naphthol, hydroxychlorobiphenyls, dopamine and T3 (triiodo-L-thyronine). The polypeptide is Cytosolic sulfotransferase 1 (Danio rerio (Zebrafish)).